Reading from the N-terminus, the 54-residue chain is UPF0057 membrane protein ssr1169 (54 aa).

The next 2 membrane-spanning stretches (helical) occupy residues 3 to 23 (IVKI…QVGI) and 31 to 51 (LLLT…WVIA).

This sequence belongs to the UPF0057 (PMP3) family.

It is found in the cell membrane. The protein is UPF0057 membrane protein ssr1169 of Synechocystis sp. (strain ATCC 27184 / PCC 6803 / Kazusa).